A 65-amino-acid polypeptide reads, in one-letter code: Hainantoxin-X-3 (65 aa).

An N-terminal signal peptide occupies residues 1–20 (MNMKILVLVAVLCLVVSTHA). The propeptide occupies 21-37 (ERHSKTDMEDSPMIQER). Disulfide bonds link C46–C59 and C55–C64.

It belongs to the neurotoxin 36 family. 02 subfamily. Expressed by the venom gland.

It localises to the secreted. Functionally, reversibly blocks N-type calcium channels (Cav2.2/CACNA1B) in rat dorsal root ganglion cells. Elicits no toxic symptoms in either vertebrates or invertebrates during a period of 48 hours post-injection, when it was assayed in vivo by direct injection into mice and cockroaches. The chain is Hainantoxin-X-3 from Cyriopagopus hainanus (Chinese bird spider).